The primary structure comprises 302 residues: Protein FdhE homolog (302 aa).

This sequence belongs to the FdhE family.

It localises to the cytoplasm. Necessary for formate dehydrogenase activity. The protein is Protein FdhE homolog of Shewanella oneidensis (strain ATCC 700550 / JCM 31522 / CIP 106686 / LMG 19005 / NCIMB 14063 / MR-1).